A 114-amino-acid chain; its full sequence is Non-specific lipid-transfer protein 1 (114 aa).

Positions 1 to 23 (MEMVSKIACFVLLCMVVVAPHAE) are cleaved as a signal peptide. Cystine bridges form between Cys-27/Cys-73, Cys-37/Cys-50, Cys-51/Cys-96, and Cys-71/Cys-110.

It belongs to the plant LTP family.

In terms of biological role, plant non-specific lipid-transfer proteins transfer phospholipids as well as galactolipids across membranes. May play a role in wax or cutin deposition in the cell walls of expanding epidermal cells and certain secretory tissues. This is Non-specific lipid-transfer protein 1 (TSW12) from Solanum lycopersicum (Tomato).